The primary structure comprises 325 residues: Beta-ketoacyl-[acyl-carrier-protein] synthase III (325 aa).

Active-site residues include C116 and H252. The tract at residues 253 to 257 (QANLR) is ACP-binding. N282 is an active-site residue.

The protein belongs to the thiolase-like superfamily. FabH family. In terms of assembly, homodimer.

It localises to the cytoplasm. The enzyme catalyses butanoyl-CoA + malonyl-[ACP] + H(+) = 3-oxohexanoyl-[ACP] + CO2 + CoA. It catalyses the reaction hexanoyl-CoA + malonyl-[ACP] + H(+) = 3-oxooctanoyl-[ACP] + CO2 + CoA. It carries out the reaction octanoyl-CoA + malonyl-[ACP] + H(+) = 3-oxodecanoyl-[ACP] + CO2 + CoA. The catalysed reaction is decanoyl-CoA + malonyl-[ACP] + H(+) = 3-oxododecanoyl-[ACP] + CO2 + CoA. The enzyme catalyses 2-methylpropanoyl-CoA + malonyl-[ACP] + H(+) = 4-methyl-3-oxopentanoyl-[ACP] + CO2 + CoA. It catalyses the reaction 3-methylbutanoyl-CoA + malonyl-[ACP] + H(+) = 5-methyl-3-oxohexanoyl-[ACP] + CO2 + CoA. It carries out the reaction malonyl-[ACP] + acetyl-CoA + H(+) = 3-oxobutanoyl-[ACP] + CO2 + CoA. It participates in lipid metabolism; fatty acid biosynthesis. In terms of biological role, catalyzes the condensation reaction of fatty acid synthesis by the addition to an acyl acceptor of two carbons from malonyl-ACP. Catalyzes the first condensation reaction which initiates fatty acid synthesis and may therefore play a role in governing the total rate of fatty acid production. Possesses both acetoacetyl-ACP synthase and acetyl transacylase activities. Can use a wide range of acyl-CoAs as the primer substrate in vitro, with a slight preference for short, medium-straight chain acyl-CoAs. Can also use branched-chain acyl-CoAs and acetyl-CoA. The chain is Beta-ketoacyl-[acyl-carrier-protein] synthase III from Xanthomonas campestris pv. campestris (strain 8004).